Consider the following 303-residue polypeptide: Probable aspartoacylase (303 aa).

Residues H13 and E16 each coordinate Zn(2+). Substrate contacts are provided by residues R55 and 62–63 (NR). H104 is a Zn(2+) binding site. Residues E162 and Y273 each contribute to the substrate site.

The protein belongs to the AspA/AstE family. Aspartoacylase subfamily. It depends on Zn(2+) as a cofactor.

It catalyses the reaction an N-acyl-L-aspartate + H2O = a carboxylate + L-aspartate. The sequence is that of Probable aspartoacylase from Parasynechococcus marenigrum (strain WH8102).